We begin with the raw amino-acid sequence, 385 residues long: Tuliposide A-converting enzyme 1, chloroplastic (385 aa).

Residues 1–77 constitute a chloroplast transit peptide; sequence MSVASFFSSL…PSPSLSPTPT (77 aa). Serine 235 functions as the Acyl-ester intermediate in the catalytic mechanism. Catalysis depends on charge relay system residues aspartate 327 and histidine 359.

The protein belongs to the AB hydrolase superfamily. In terms of assembly, homodimer. In terms of tissue distribution, expressed in roots, stems, leaves, petals, stamens and pistils, but not in bulb scales.

The protein localises to the plastid. It is found in the chloroplast. It carries out the reaction 6-tuliposide A = tulipalin A + D-glucose. Inhibited by NaF, AgNO(3), HgCl(2), CuSO(4) and phenylmethylsulfonyl fluoride (PMSF). Functionally, lactone-forming carboxylesterases, specifically catalyzing intramolecular transesterification, but not hydrolysis. Involved in the biosynthesis of tulipalins, defensive chemicals that show antimicrobial activities against a broad range of strains of bacteria and fungi. Substrates are 6-tuliposide A &gt; 6-tuliposide B. The chain is Tuliposide A-converting enzyme 1, chloroplastic (TCEA1) from Tulipa gesneriana (Garden tulip).